A 593-amino-acid chain; its full sequence is Capsid protein 1 (593 aa).

Belongs to the NCLDV major capsid protein family.

It is found in the virion. In Acanthamoeba polyphaga mimivirus (APMV), this protein is Capsid protein 1.